Reading from the N-terminus, the 101-residue chain is Urease subunit beta (101 aa).

It belongs to the urease beta subunit family. As to quaternary structure, heterotrimer of UreA (gamma), UreB (beta) and UreC (alpha) subunits. Three heterotrimers associate to form the active enzyme.

It localises to the cytoplasm. The catalysed reaction is urea + 2 H2O + H(+) = hydrogencarbonate + 2 NH4(+). Its pathway is nitrogen metabolism; urea degradation; CO(2) and NH(3) from urea (urease route): step 1/1. In Bradyrhizobium sp. (strain BTAi1 / ATCC BAA-1182), this protein is Urease subunit beta.